The sequence spans 245 residues: UPF0280 protein UNCMA_16740 (245 aa).

The protein belongs to the UPF0280 family.

This chain is UPF0280 protein UNCMA_16740, found in Methanocella arvoryzae (strain DSM 22066 / NBRC 105507 / MRE50).